A 200-amino-acid chain; its full sequence is Small ribosomal subunit protein uS4 (200 aa).

Positions 22–43 (TGKELERRPYAPGQHGPTQRKK) are disordered. Positions 92-170 (QRLDNIVYRL…VPEYVTFDAE (79 aa)) constitute an S4 RNA-binding domain.

This sequence belongs to the universal ribosomal protein uS4 family. In terms of assembly, part of the 30S ribosomal subunit. Contacts protein S5. The interaction surface between S4 and S5 is involved in control of translational fidelity.

Its function is as follows. One of the primary rRNA binding proteins, it binds directly to 16S rRNA where it nucleates assembly of the body of the 30S subunit. In terms of biological role, with S5 and S12 plays an important role in translational accuracy. The polypeptide is Small ribosomal subunit protein uS4 (Listeria welshimeri serovar 6b (strain ATCC 35897 / DSM 20650 / CCUG 15529 / CIP 8149 / NCTC 11857 / SLCC 5334 / V8)).